A 263-amino-acid chain; its full sequence is Shikimate dehydrogenase (NADP(+)) (263 aa).

Shikimate-binding positions include 16 to 18 (SKS) and T65. K69 serves as the catalytic Proton acceptor. Residues N90 and D105 each contribute to the shikimate site. NADP(+) contacts are provided by residues 125–129 (GAGGS), S181, and L208. Y210 serves as a coordination point for shikimate. G230 provides a ligand contact to NADP(+). Q237 lines the shikimate pocket.

It belongs to the shikimate dehydrogenase family. In terms of assembly, homodimer.

The enzyme catalyses shikimate + NADP(+) = 3-dehydroshikimate + NADPH + H(+). It functions in the pathway metabolic intermediate biosynthesis; chorismate biosynthesis; chorismate from D-erythrose 4-phosphate and phosphoenolpyruvate: step 4/7. Involved in the biosynthesis of the chorismate, which leads to the biosynthesis of aromatic amino acids. Catalyzes the reversible NADPH linked reduction of 3-dehydroshikimate (DHSA) to yield shikimate (SA). This is Shikimate dehydrogenase (NADP(+)) from Helicobacter pylori (strain ATCC 700392 / 26695) (Campylobacter pylori).